The sequence spans 214 residues: NKG2-D type II integral membrane protein (214 aa).

Residues 1-56 (MGWIRDRRSPSSMEIRELHNRDVINRGAFKSRQKRTQTLITSKCGENPSPFFLARS) are Cytoplasmic-facing. Residues 57 to 77 (IAIAMGIRFIVMVMIYSGMII) form a helical; Signal-anchor for type II membrane protein membrane-spanning segment. The Extracellular segment spans residues 78–214 (NLLFNQEAPS…NTYICMKRTV (137 aa)). 2 cysteine pairs are disulfide-bonded: C94–C103 and C97–C108. One can recognise a C-type lectin domain in the interval 98-210 (PKNWICYRNS…CLTLNTYICM (113 aa)). N-linked (GlcNAc...) asparagine glycans are attached at residues N113, N129, N161, and N184. Cystine bridges form between C125/C209 and C187/C201.

Homodimer; disulfide-linked. Heterohexamer composed of two subunits of KLRK1 and four subunits of HCST/DAP10. Interacts (via transmembrane domain) with HCST/DAP10 (via transmembrane domain); the interaction is required for KLRK1 NK cell surface and induces NK cell-mediated cytotoxicity. Can form disulfide-bonded heterodimer with CD94. Interacts with CEACAM1; recruits PTPN6 that dephosphorylates VAV1. In terms of tissue distribution, detected in peripheral blood leukocytes, macrophages, monocytes and natural killer cells.

It localises to the cell membrane. Functions as an activating and costimulatory receptor involved in immunosurveillance upon binding to various cellular stress-inducible ligands displayed at the surface of autologous tumor cells and virus-infected cells. Provides both stimulatory and costimulatory innate immune responses on activated killer (NK) cells, leading to cytotoxic activity. Acts as a costimulatory receptor for T-cell receptor (TCR) in CD8(+) T-cell-mediated adaptive immune responses by amplifying T-cell activation. Stimulates perforin-mediated elimination of ligand-expressing tumor cells. Signaling involves calcium influx, culminating in the expression of TNF-alpha. Participates in NK cell-mediated bone marrow graft rejection. May play a regulatory role in differentiation and survival of NK cells. Binds to ligands belonging to various subfamilies of MHC class I-related glycoproteins. The sequence is that of NKG2-D type II integral membrane protein (KLRK1) from Sus scrofa (Pig).